A 275-amino-acid polypeptide reads, in one-letter code: MRIGIISRTDKEEAIELDDTIIKYLFENNIEVELDSQLTKKLPQYSENSVDITKMNADIVLCVGGDGTVLHAQRYLSPKKIPILSINMGTVGFLTEVDPEDIFECLDKLLSYDFFIEERLQLDVLIDSQWHTVLNELVLMTSQPAKMLDLRVSVDEEIVDEVRADGLIISTPSGSTAYAMSAGGPIVDPRVDAAIIIPICPFKLNTRPKIVPADSIITVKFLKEGKKGVAVLDGIVNKEFDYLGEIKLKKSENSAYFVRFKKNFYNSVNNKLIVG.

Residue D66 is the Proton acceptor of the active site. NAD(+) contacts are provided by residues 66 to 67 (DG), H71, 135 to 136 (NE), K146, R163, D165, and 176 to 181 (TAYAMS).

Belongs to the NAD kinase family. A divalent metal cation is required as a cofactor.

The protein localises to the cytoplasm. The catalysed reaction is NAD(+) + ATP = ADP + NADP(+) + H(+). Involved in the regulation of the intracellular balance of NAD and NADP, and is a key enzyme in the biosynthesis of NADP. Catalyzes specifically the phosphorylation on 2'-hydroxyl of the adenosine moiety of NAD to yield NADP. This chain is NAD kinase, found in Methanosphaera stadtmanae (strain ATCC 43021 / DSM 3091 / JCM 11832 / MCB-3).